We begin with the raw amino-acid sequence, 61 residues long: UPF0391 membrane protein Pnap_0032 (61 aa).

The next 2 membrane-spanning stretches (helical) occupy residues Ala-5 to Ala-25 and Val-33 to Val-53.

This sequence belongs to the UPF0391 family.

It is found in the cell membrane. This chain is UPF0391 membrane protein Pnap_0032, found in Polaromonas naphthalenivorans (strain CJ2).